The sequence spans 58 residues: 6.8 kDa protein (58 aa).

In Satellite tobacco mosaic virus (STMV), this protein is 6.8 kDa protein.